The chain runs to 432 residues: Ectonucleoside triphosphate diphosphohydrolase 5 (432 aa).

A signal peptide spans 1–24 (MALYQGAAFFMLVASCVCSTVFHR). Catalysis depends on Glu-175, which acts as the Proton acceptor. Asn-235 carries N-linked (GlcNAc...) asparagine glycosylation. 2 disulfides stabilise this stretch: Cys-275–Cys-307 and Cys-367–Cys-381. Asn-372 carries an N-linked (GlcNAc...) asparagine glycan.

The protein belongs to the GDA1/CD39 NTPase family. Monomer; active form. Homodimer; disulfide-linked. Homodimers are enzymatically inactive. Ca(2+) is required as a cofactor. Requires Mg(2+) as cofactor. In terms of processing, N-glycosylated; high-mannose type.

Its subcellular location is the endoplasmic reticulum. The protein localises to the secreted. The enzyme catalyses a ribonucleoside 5'-diphosphate + H2O = a ribonucleoside 5'-phosphate + phosphate + H(+). The catalysed reaction is GDP + H2O = GMP + phosphate + H(+). It carries out the reaction UDP + H2O = UMP + phosphate + H(+). It catalyses the reaction IDP + H2O = IMP + phosphate + H(+). The enzyme catalyses CDP + H2O = CMP + phosphate + H(+). The catalysed reaction is ADP + H2O = AMP + phosphate + H(+). Its pathway is protein modification; protein glycosylation. Hydrolyzes nucleoside diphosphates with a preference for GDP, IDP and UDP compared to ADP and CDP. In the lumen of the endoplasmic reticulum, hydrolyzes UDP that acts as an end-product feedback inhibitor of the UDP-Glc:glycoprotein glucosyltransferases. UMP can be transported back by an UDP-sugar antiporter to the cytosol where it is consumed to regenerate UDP-glucose. Therefore, it positively regulates protein reglucosylation by clearing UDP from the ER lumen and by promoting the regeneration of UDP-glucose. Protein reglucosylation is essential to proper glycoprotein folding and quality control in the ER. The protein is Ectonucleoside triphosphate diphosphohydrolase 5 (ENTPD5) of Bos taurus (Bovine).